Reading from the N-terminus, the 184-residue chain is MNWRSERIWIELITGSRKTSNFCWAFILFLGSLGFLLVGTSSYLGRNLISLFPSQQIIFFPQGIVMSFYGIAGLFISSYLWCTISWNVGSGYDRFDRKEGIVCIFRWGFPGKNRRIFLRFFMKDIQSIRIEVKEGLYPRRVLYMEIRGQGAIPLTRTDENLTPREIEQKAAELAYFLRVPIEVF.

Transmembrane regions (helical) follow at residues 22–42 and 57–77; these read FCWAFILFLGSLGFLLVGTSS and IIFFPQGIVMSFYGIAGLFIS.

It belongs to the Ycf4 family.

It localises to the plastid. It is found in the chloroplast thylakoid membrane. In terms of biological role, seems to be required for the assembly of the photosystem I complex. This is Photosystem I assembly protein Ycf4 from Platanus occidentalis (Sycamore).